We begin with the raw amino-acid sequence, 4655 residues long: MDRGPAAVACTLLLALVACLAPASGQECDSAHFRCGSGHCIPADWRCDGTKDCSDDADEIGCAVVTCQQGYFKCQSEGQCIPNSWVCDQDQDCDDGSDERQDCSQSTCSSHQITCSNGQCIPSEYRCDHVRDCPDGADENDCQYPTCEQLTCDNGACYNTSQKCDWKVDCRDSSDEINCTEICLHNEFSCGNGECIPRAYVCDHDNDCQDGSDEHACNYPTCGGYQFTCPSGRCIYQNWVCDGEDDCKDNGDEDGCESGPHDVHKCSPREWSCPESGRCISIYKVCDGILDCPGREDENNTSTGKYCSMTLCSALNCQYQCHETPYGGACFCPPGYIINHNDSRTCVEFDDCQIWGICDQKCESRPGRHLCHCEEGYILERGQYCKANDSFGEASIIFSNGRDLLIGDIHGRSFRILVESQNRGVAVGVAFHYHLQRVFWTDTVQNKVFSVDINGLNIQEVLNVSVETPENLAVDWVNNKIYLVETKVNRIDMVNLDGSYRVTLITENLGHPRGIAVDPTVGYLFFSDWESLSGEPKLERAFMDGSNRKDLVKTKLGWPAGVTLDMISKRVYWVDSRFDYIETVTYDGIQRKTVVHGGSLIPHPFGVSLFEGQVFFTDWTKMAVLKANKFTETNPQVYYQASLRPYGVTVYHSLRQPYATNPCKDNNGGCEQVCVLSHRTDNDGLGFRCKCTFGFQLDTDERHCIAVQNFLIFSSQVAIRGIPFTLSTQEDVMVPVSGNPSFFVGIDFDAQDSTIFFSDMSKHMIFKQKIDGTGREILAANRVENVESLAFDWISKNLYWTDSHYKSISVMRLADKTRRTVVQYLNNPRSVVVHPFAGYLFFTDWFRPAKIMRAWSDGSHLLPVINTTLGWPNGLAIDWAASRLYWVDAYFDKIEHSTFDGLDRRRLGHIEQMTHPFGLAIFGEHLFFTDWRLGAIIRVRKADGGEMTVIRSGIAYILHLKSYDVNIQTGSNACNQPTHPNGDCSHFCFPVPNFQRVCGCPYGMRLASNHLTCEGDPTNEPPTEQCGLFSFPCKNGRCVPNYYLCDGVDDCHDNSDEQLCGTLNNTCSSSAFTCGHGECIPAHWRCDKRNDCVDGSDEHNCPTHAPASCLDTQYTCDNHQCISKNWVCDTDNDCGDGSDEKNCNSTETCQPSQFNCPNHRCIDLSFVCDGDKDCVDGSDEVGCVLNCTASQFKCASGDKCIGVTNRCDGVFDCSDNSDEAGCPTRPPGMCHSDEFQCQEDGICIPNFWECDGHPDCLYGSDEHNACVPKTCPSSYFHCDNGNCIHRAWLCDRDNDCGDMSDEKDCPTQPFRCPSWQWQCLGHNICVNLSVVCDGIFDCPNGTDESPLCNGNSCSDFNGGCTHECVQEPFGAKCLCPLGFLLANDSKTCEDIDECDILGSCSQHCYNMRGSFRCSCDTGYMLESDGRTCKVTASESLLLLVASQNKIIADSVTSQVHNIYSLVENGSYIVAVDFDSISGRIFWSDATQGKTWSAFQNGTDRRVVFDSSIILTETIAIDWVGRNLYWTDYALETIEVSKIDGSHRTVLISKNLTNPRGLALDPRMNEHLLFWSDWGHHPRIERASMDGSMRTVIVQDKIFWPCGLTIDYPNRLLYFMDSYLDYMDFCDYNGHHRRQVIASDLIIRHPYALTLFEDSVYWTDRATRRVMRANKWHGGNQSVVMYNIQWPLGIVAVHPSKQPNSVNPCAFSRCSHLCLLSSQGPHFYSCVCPSGWSLSPDLLNCLRDDQPFLITVRQHIIFGISLNPEVKSNDAMVPIAGIQNGLDVEFDDAEQYIYWVENPGEIHRVKTDGTNRTVFASISMVGPSMNLALDWISRNLYSTNPRTQSIEVLTLHGDIRYRKTLIANDGTALGVGFPIGITVDPARGKLYWSDQGTDSGVPAKIASANMDGTSVKTLFTGNLEHLECVTLDIEEQKLYWAVTGRGVIERGNVDGTDRMILVHQLSHPWGIAVHDSFLYYTDEQYEVIERVDKATGANKIVLRDNVPNLRGLQVYHRRNAAESSNGCSNNMNACQQICLPVPGGLFSCACATGFKLNPDNRSCSPYNSFIVVSMLSAIRGFSLELSDHSETMVPVAGQGRNALHVDVDVSSGFIYWCDFSSSVASDNAIRRIKPDGSSLMNIVTHGIGENGVRGIAVDWVAGNLYFTNAFVSETLIEVLRINTTYRRVLLKVTVDMPRHIVVDPKNRYLFWADYGQRPKIERSFLDCTNRTVLVSEGIVTPRGLAVDRSDGYVYWVDDSLDIIARIRINGENSEVIRYGSRYPTPYGITVFENSIIWVDRNLKKIFQASKEPENTEPPTVIRDNINWLRDVTIFDKQVQPRSPAEVNNNPCLENNGGCSHLCFALPGLHTPKCDCAFGTLQSDGKNCAISTENFLIFALSNSLRSLHLDPENHSPPFQTINVERTVMSLDYDSVSDRIYFTQNLASGVGQISYATLSSGIHTPTVIASGIGTADGIAFDWITRRIYYSDYLNQMINSMAEDGSNRTVIARVPKPRAIVLDPCQGYLYWADWDTHAKIERATLGGNFRVPIVNSSLVMPSGLTLDYEEDLLYWVDASLQRIERSTLTGVDREVIVNAAVHAFGLTLYGQYIYWTDLYTQRIYRANKYDGSGQIAMTTNLLSQPRGINTVVKNQKQQCNNPCEQFNGGCSHICAPGPNGAECQCPHEGNWYLANNRKHCIVDNGERCGASSFTCSNGRCISEEWKCDNDNDCGDGSDEMESVCALHTCSPTAFTCANGRCVQYSYRCDYYNDCGDGSDEAGCLFRDCNATTEFMCNNRRCIPREFICNGVDNCHDNNTSDEKNCPDRTCQSGYTKCHNSNICIPRVYLCDGDNDCGDNSDENPTYCTTHTCSSSEFQCASGRCIPQHWYCDQETDCFDASDEPASCGHSERTCLADEFKCDGGRCIPSEWICDGDNDCGDMSDEDKRHQCQNQNCSDSEFLCVNDRPPDRRCIPQSWVCDGDVDCTDGYDENQNCTRRTCSENEFTCGYGLCIPKIFRCDRHNDCGDYSDERGCLYQTCQQNQFTCQNGRCISKTFVCDEDNDCGDGSDELMHLCHTPEPTCPPHEFKCDNGRCIEMMKLCNHLDDCLDNSDEKGCGINECHDPSISGCDHNCTDTLTSFYCSCRPGYKLMSDKRTCVDIDECTEMPFVCSQKCENVIGSYICKCAPGYLREPDGKTCRQNSNIEPYLIFSNRYYLRNLTIDGYFYSLILEGLDNVVALDFDRVEKRLYWIDTQRQVIERMFLNKTNKETIINHRLPAAESLAVDWVSRKLYWLDARLDGLFVSDLNGGHRRMLAQHCVDANNTFCFDNPRGLALHPQYGYLYWADWGHRAYIGRVGMDGTNKSVIISTKLEWPNGITIDYTNDLLYWADAHLGYIEYSDLEGHHRHTVYDGALPHPFAITIFEDTIYWTDWNTRTVEKGNKYDGSNRQTLVNTTHRPFDIHVYHPYRQPIVSNPCGTNNGGCSHLCLIKPGGKGFTCECPDDFRTLQLSGSTYCMPMCSSTQFLCANNEKCIPIWWKCDGQKDCSDGSDELALCPQRFCRLGQFQCSDGNCTSPQTLCNAHQNCPDGSDEDRLLCENHHCDSNEWQCANKRCIPESWQCDTFNDCEDNSDEDSSHCASRTCRPGQFRCANGRCIPQAWKCDVDNDCGDHSDEPIEECMSSAHLCDNFTEFSCKTNYRCIPKWAVCNGVDDCRDNSDEQGCEERTCHPVGDFRCKNHHCIPLRWQCDGQNDCGDNSDEENCAPRECTESEFRCVNQQCIPSRWICDHYNDCGDNSDERDCEMRTCHPEYFQCTSGHCVHSELKCDGSADCLDASDEADCPTRFPDGAYCQATMFECKNHVCIPPYWKCDGDDDCGDGSDEELHLCLDVPCNSPNRFRCDNNRCIYSHEVCNGVDDCGDGTDETEEHCRKPTPKPCTEYEYKCGNGHCIPHDNVCDDADDCGDWSDELGCNKGKERTCAENICEQNCTQLNEGGFICSCTAGFETNVFDRTSCLDINECEQFGTCPQHCRNTKGSYECVCADGFTSMSDRPGKRCAAEGSSPLLLLPDNVRIRKYNLSSERFSEYLQDEEYIQAVDYDWDPKDIGLSVVYYTVRGEGSRFGAIKRAYIPNFESGRNNLVQEVDLKLKYVMQPDGIAVDWVGRHIYWSDVKNKRIEVAKLDGRYRKWLISTDLDQPAAIAVNPKLGLMFWTDWGKEPKIESAWMNGEDRNILVFEDLGWPTGLSIDYLNNDRIYWSDFKEDVIETIKYDGTDRRVIAKEAMNPYSLDIFEDQLYWISKEKGEVWKQNKFGQGKKEKTLVVNPWLTQVRIFHQLRYNKSVPNLCKQICSHLCLLRPGGYSCACPQGSSFIEGSTTECDAAIELPINLPPPCRCMHGGNCYFDETDLPKCKCPSGYTGKYCEMAFSKGISPGTTAVAVLLTILLIVVIGALAIAGFFHYRRTGSLLPALPKLPSLSSLVKPSENGNGVTFRSGADLNMDIGVSGFGPETAIDRSMAMSEDFVMEMGKQPIIFENPMYSARDSAVKVVQPIQVTVSENVDNKNYGSPINPSEIVPETNPTSPAADGTQVTKWNLFKRKSKQTTNFENPIYAQMENEQKESVAATPPPSPSLPAKPKPPSRRDPTPTYSATEDTFKDTANLVKEDSEV.

The N-terminal stretch at 1 to 25 (MDRGPAAVACTLLLALVACLAPASG) is a signal peptide. The Extracellular segment spans residues 26–4423 (QECDSAHFRC…FSKGISPGTT (4398 aa)). LDL-receptor class A domains follow at residues 27 to 63 (ECDS…IGCA), 66 to 104 (TCQQ…QDCS), 107 to 143 (TCSS…NDCQ), 146 to 180 (TCEQ…INCT), 182 to 218 (ICLH…HACN), 221 to 257 (TCGG…DGCE), and 265 to 308 (KCSP…KYCS). 21 disulfide bridges follow: cysteine 28-cysteine 40, cysteine 35-cysteine 53, cysteine 47-cysteine 62, cysteine 67-cysteine 80, cysteine 74-cysteine 93, cysteine 87-cysteine 103, cysteine 108-cysteine 120, cysteine 115-cysteine 133, cysteine 127-cysteine 142, cysteine 147-cysteine 157, cysteine 152-cysteine 170, cysteine 164-cysteine 179, cysteine 183-cysteine 195, cysteine 190-cysteine 208, cysteine 202-cysteine 217, cysteine 222-cysteine 234, cysteine 229-cysteine 247, cysteine 241-cysteine 256, cysteine 266-cysteine 279, cysteine 273-cysteine 292, and cysteine 286-cysteine 307. 2 N-linked (GlcNAc...) asparagine glycosylation sites follow: asparagine 159 and asparagine 178. N-linked (GlcNAc...) asparagine glycosylation is found at asparagine 299, asparagine 300, asparagine 341, asparagine 388, and asparagine 463. LDL-receptor class B repeat units follow at residues 436–478 (QRVF…DWVN), 479–521 (NKIY…DPTV), 522–568 (GYLF…DMIS), 569–613 (KRVY…FEGQ), 753–795 (STIF…DWIS), 796–837 (KNLY…HPFA), 838–881 (GYLF…DWAA), and 882–925 (SRLY…FGEH). Residue asparagine 866 is glycosylated (N-linked (GlcNAc...) asparagine). The 37-residue stretch at 1025–1061 (QCGLFSFPCKNGRCVPNYYLCDGVDDCHDNSDEQLCG) folds into the LDL-receptor class A 8 domain. Disulfide bonds link cysteine 1026-cysteine 1038, cysteine 1033-cysteine 1051, and cysteine 1045-cysteine 1060. An N-linked (GlcNAc...) asparagine glycan is attached at asparagine 1064. LDL-receptor class A domains lie at 1066–1102 (TCSS…HNCP), 1108–1144 (SCLD…KNCN), 1148–1184 (TCQP…VGCV), 1186–1223 (NCTA…AGCP), 1229–1267 (MCHS…NACV), 1270–1306 (TCPS…KDCP), and 1304–1349 (DCPT…PLCN). 6 disulfide bridges follow: cysteine 1067-cysteine 1079, cysteine 1074-cysteine 1092, cysteine 1086-cysteine 1101, cysteine 1109-cysteine 1121, cysteine 1116-cysteine 1134, and cysteine 1128-cysteine 1143. Ca(2+) is bound by residues tryptophan 1126, aspartate 1129, aspartate 1131, aspartate 1133, aspartate 1139, and glutamate 1140. Residue asparagine 1144 is glycosylated (N-linked (GlcNAc...) asparagine). 3 disulfide bridges follow: cysteine 1149–cysteine 1161, cysteine 1156–cysteine 1174, and cysteine 1168–cysteine 1183. An N-linked (GlcNAc...) asparagine glycan is attached at asparagine 1186. 12 disulfide bridges follow: cysteine 1187/cysteine 1200, cysteine 1194/cysteine 1213, cysteine 1207/cysteine 1222, cysteine 1230/cysteine 1243, cysteine 1237/cysteine 1256, cysteine 1250/cysteine 1266, cysteine 1271/cysteine 1283, cysteine 1278/cysteine 1296, cysteine 1290/cysteine 1305, cysteine 1305/cysteine 1325, cysteine 1312/cysteine 1338, and cysteine 1332/cysteine 1348. The Ca(2+) site is built by aspartate 1208, valine 1210, aspartate 1212, aspartate 1218, and glutamate 1219. 3 N-linked (GlcNAc...) asparagine glycosylation sites follow: asparagine 1327, asparagine 1340, and asparagine 1383. Residues 1390–1429 (DIDECDILGSCSQHCYNMRGSFRCSCDTGYMLESDGRTCK) enclose the EGF-like 1; calcium-binding domain. Disulfide bonds link cysteine 1394–cysteine 1404, cysteine 1400–cysteine 1413, and cysteine 1415–cysteine 1428. 3 N-linked (GlcNAc...) asparagine glycosylation sites follow: asparagine 1464, asparagine 1496, and asparagine 1550. LDL-receptor class B repeat units follow at residues 1478-1520 (GRIF…DWVG), 1521-1563 (RNLY…DPRM), 1566-1609 (HLLF…DYPN), 1610-1654 (RLLY…FEDS), and 1655-1695 (VYWT…VHPS). Asparagine 1675 carries an N-linked (GlcNAc...) asparagine glycan. Positions 1700–1741 (SVNPCAFSRCSHLCLLSSQGPHFYSCVCPSGWSLSPDLLNCL) constitute an EGF-like 2 domain. Disulfide bonds link cysteine 1704/cysteine 1713, cysteine 1709/cysteine 1725, and cysteine 1727/cysteine 1740. 5 LDL-receptor class B repeats span residues 1790-1832 (QYIY…DWIS), 1833-1882 (RNLY…DPAR), 1883-1930 (GKLY…DIEE), 1931-1972 (QKLY…HDSF), and 1973-2013 (LYYT…YHRR). A glycan (N-linked (GlcNAc...) asparagine) is linked at asparagine 1810. A glycan (N-linked (GlcNAc...) asparagine) is linked at asparagine 2055. 9 LDL-receptor class B repeats span residues 2107 to 2156 (GFIY…DWVA), 2157 to 2201 (GNLY…DPKN), 2202 to 2245 (RYLF…DRSD), 2246 to 2289 (GYVY…FENS), 2431 to 2477 (DRIY…DWIT), 2478 to 2518 (RRIY…DPCQ), 2519 to 2562 (GYLY…DYEE), 2563 to 2604 (DLLY…YGQY), and 2605 to 2646 (IYWT…VVKN). Asparagine 2177 and asparagine 2224 each carry an N-linked (GlcNAc...) asparagine glycan. N-linked (GlcNAc...) asparagine glycans are attached at residues asparagine 2499 and asparagine 2547. LDL-receptor class A domains are found at residues 2699–2737 (RCGA…SVCA), 2740–2776 (TCSP…AGCL), 2779–2818 (DCNA…KNCP), 2821–2860 (TCQS…TYCT), 2863–2900 (TCSS…ASCG), 2905–2944 (TCLA…HQCQ), 2947–2989 (NCSD…QNCT), 2992–3028 (TCSE…RGCL), 3031–3069 (TCQQ…HLCH), and 3074–3110 (TCPP…KGCG). Disulfide bonds link cysteine 2700-cysteine 2712, cysteine 2707-cysteine 2725, cysteine 2719-cysteine 2736, cysteine 2741-cysteine 2753, cysteine 2748-cysteine 2766, cysteine 2760-cysteine 2775, cysteine 2780-cysteine 2793, cysteine 2788-cysteine 2806, cysteine 2800-cysteine 2817, cysteine 2822-cysteine 2835, cysteine 2829-cysteine 2848, cysteine 2842-cysteine 2859, cysteine 2864-cysteine 2876, cysteine 2871-cysteine 2889, cysteine 2883-cysteine 2899, cysteine 2906-cysteine 2918, cysteine 2913-cysteine 2931, and cysteine 2925-cysteine 2943. Asparagine 2781 is a glycosylation site (N-linked (GlcNAc...) asparagine). Asparagine 2809 and asparagine 2810 each carry an N-linked (GlcNAc...) asparagine glycan. N-linked (GlcNAc...) asparagine glycosylation is present at asparagine 2947. 18 cysteine pairs are disulfide-bonded: cysteine 2948-cysteine 2965, cysteine 2955-cysteine 2978, cysteine 2972-cysteine 2988, cysteine 2993-cysteine 3005, cysteine 3000-cysteine 3018, cysteine 3012-cysteine 3027, cysteine 3032-cysteine 3044, cysteine 3039-cysteine 3057, cysteine 3051-cysteine 3068, cysteine 3075-cysteine 3087, cysteine 3082-cysteine 3100, cysteine 3094-cysteine 3109, cysteine 3114-cysteine 3126, cysteine 3122-cysteine 3135, cysteine 3137-cysteine 3150, cysteine 3156-cysteine 3167, cysteine 3163-cysteine 3176, and cysteine 3178-cysteine 3191. Asparagine 2987 is a glycosylation site (N-linked (GlcNAc...) asparagine). The 42-residue stretch at 3110–3151 (GINECHDPSISGCDHNCTDTLTSFYCSCRPGYKLMSDKRTCV) folds into the EGF-like 3 domain. The N-linked (GlcNAc...) asparagine glycan is linked to asparagine 3125. The EGF-like 4; calcium-binding domain maps to 3152–3192 (DIDECTEMPFVCSQKCENVIGSYICKCAPGYLREPDGKTCR). 4 N-linked (GlcNAc...) asparagine glycosylation sites follow: asparagine 3211, asparagine 3257, asparagine 3315, and asparagine 3355. LDL-receptor class B repeat units lie at residues 3239–3281 (KRLY…DWVS), 3282–3324 (RKLY…DNPR), 3333–3376 (GYLY…DYTN), 3377–3419 (DLLY…FEDT), and 3420–3460 (IYWT…YHPY). N-linked (GlcNAc...) asparagine glycosylation occurs at asparagine 3446. LDL-receptor class A domains lie at 3511-3549 (MCSS…ALCP), 3552-3590 (FCRL…LLCE), 3593-3631 (HCDS…SHCA), 3634-3672 (TCRP…EECM), 3677-3715 (LCDN…QGCE), 3718-3755 (TCHP…ENCA), 3758-3794 (ECTE…RDCE), 3797-3833 (TCHP…ADCP), 3841-3879 (YCQA…HLCL), 3882-3921 (PCNS…EHCR), and 3927-3963 (PCTE…LGCN). 33 disulfides stabilise this stretch: cysteine 3512/cysteine 3525, cysteine 3519/cysteine 3538, cysteine 3532/cysteine 3548, cysteine 3553/cysteine 3565, cysteine 3560/cysteine 3578, cysteine 3572/cysteine 3589, cysteine 3594/cysteine 3606, cysteine 3601/cysteine 3619, cysteine 3613/cysteine 3630, cysteine 3635/cysteine 3647, cysteine 3642/cysteine 3660, cysteine 3654/cysteine 3671, cysteine 3678/cysteine 3692, cysteine 3686/cysteine 3705, cysteine 3699/cysteine 3714, cysteine 3719/cysteine 3732, cysteine 3727/cysteine 3745, cysteine 3739/cysteine 3754, cysteine 3759/cysteine 3771, cysteine 3766/cysteine 3784, cysteine 3778/cysteine 3793, cysteine 3798/cysteine 3810, cysteine 3805/cysteine 3823, cysteine 3817/cysteine 3832, cysteine 3842/cysteine 3854, cysteine 3849/cysteine 3867, cysteine 3861/cysteine 3878, cysteine 3883/cysteine 3896, cysteine 3891/cysteine 3909, cysteine 3903/cysteine 3920, cysteine 3928/cysteine 3940, cysteine 3935/cysteine 3953, and cysteine 3947/cysteine 3962. The N-linked (GlcNAc...) asparagine glycan is linked to asparagine 3564. The N-linked (GlcNAc...) asparagine glycan is linked to asparagine 3680. Residue asparagine 3978 is glycosylated (N-linked (GlcNAc...) asparagine). The EGF-like 5; calcium-binding domain maps to 4007–4048 (DINECEQFGTCPQHCRNTKGSYECVCADGFTSMSDRPGKRCA). 3 disulfides stabilise this stretch: cysteine 4011/cysteine 4021, cysteine 4017/cysteine 4030, and cysteine 4032/cysteine 4047. Asparagine 4068 carries N-linked (GlcNAc...) asparagine glycosylation. 3 LDL-receptor class B repeats span residues 4154–4196 (RHIY…NPKL), 4197–4240 (GLMF…DYLN), and 4242–4283 (DRIY…FEDQ). Asparagine 4327 carries N-linked (GlcNAc...) asparagine glycosylation. An EGF-like 6 domain is found at 4377 to 4411 (LPPPCRCMHGGNCYFDETDLPKCKCPSGYTGKYCE). 3 disulfides stabilise this stretch: cysteine 4381/cysteine 4389, cysteine 4383/cysteine 4399, and cysteine 4401/cysteine 4410. The helical transmembrane segment at 4424–4446 (AVAVLLTILLIVVIGALAIAGFF) threads the bilayer. The Cytoplasmic segment spans residues 4447–4655 (HYRRTGSLLP…ANLVKEDSEV (209 aa)). The short motif at 4453-4462 (SLLPALPKLP) is the SH3-binding element. The PxLPxI/L motif 1; mediates interaction with ANKRA2 motif lies at 4456–4461 (PALPKL). The PxLPxI/L motif 2; mediates interaction with ANKRA2 signature appears at 4459–4464 (PKLPSL). A phosphoserine mark is found at serine 4463 and serine 4466. Residues 4521–4526 (FENPMY) carry the Endocytosis signal motif. The segment at 4550–4574 (KNYGSPINPSEIVPETNPTSPAADG) is disordered. Polar residues predominate over residues 4565 to 4574 (TNPTSPAADG). Phosphoserine is present on serine 4569. An interaction with DAB2 region spans residues 4589–4602 (QTTNFENPIYAQME). Positions 4595–4598 (NPIY) match the NPXY motif motif. The short motif at 4598–4601 (YAQM) is the SH2-binding element. Residues 4601–4655 (MENEQKESVAATPPPSPSLPAKPKPPSRRDPTPTYSATEDTFKDTANLVKEDSEV) are disordered. The SH3-binding signature appears at 4611-4622 (ATPPPSPSLPAK). Residues 4612-4624 (TPPPSPSLPAKPK) are compositionally biased toward pro residues. Serine 4616 carries the phosphoserine modification. Position 4632 is a phosphothreonine (threonine 4632). Phosphoserine is present on serine 4653.

Belongs to the LDLR family. As to quaternary structure, binds plasminogen, extracellular matrix components, plasminogen activator-plasminogen activator inhibitor type I complex, apolipoprotein E-enriched beta-VLDL, lipoprotein lipase, lactoferrin, CLU/clusterin and calcium. Forms a multimeric complex together with LRPAP1. Interacts (via PxLPxI/L motif) with ANKRA2 (via ankyrin repeats). Interacts with LRP2BP. Interacts (via NPXY motif) with DAB2; the interaction is not affected by tyrosine phosphorylation of the NPXY motif. Interacts with MB. Interacts with BMP4. Interacts with the Sonic hedgehog protein N-product which is the active product of SHH. Interacts with CST3 in a calcium-dependent manner. Interacts with the vitamin-D binding protein GC/DBP. Interacts with sex hormone-binding protein SHBG. Interacts with angiotensin-2. Also interacts with angiotensin 1-7. Interacts with APOM. Interacts with selenoprotein SEPP1. Interacts with LEP. Interacts with ALB. Interacts with the antiapoptotic protein BIRC5/survivin. Interacts with matrix metalloproteinase MMP2 in complex with metalloproteinase inhibitor TIMP1. In neurons, forms a trimeric complex with APP and APPB1/FE65. Interacts with LDLRAP1/ARH; mediates trafficking of LRP2 to the endocytic recycling compartment. Does not interact with beta-amyloid protein 40 alone but interacts with the complex composed of beta-amyloid protein 40 and CLU/APOJ. Interacts with MDK. A fraction undergoes proteolytic cleavage of the extracellular domain at the cell membrane to generate a cytoplasmic tail fragment. This is internalized into the early endosome from where it trafficks in an LDLRAP1/ARH-dependent manner to the endocytic recycling compartment (ERC). In the ERC, it is further cleaved by gamma-secretase to release a fragment which translocates to the nucleus and mediates transcriptional repression. In terms of processing, N-glycosylation is required for ligand binding. Expressed in first and third trimester cytotrophoblasts in the placenta (at protein level). Absorptive epithelia, including renal proximal tubules.

The protein resides in the apical cell membrane. It localises to the endosome lumen. The protein localises to the membrane. It is found in the coated pit. Its subcellular location is the cell projection. The protein resides in the dendrite. It localises to the axon. In terms of biological role, multiligand endocytic receptor. Acts together with CUBN to mediate endocytosis of high-density lipoproteins. Mediates receptor-mediated uptake of polybasic drugs such as aprotinin, aminoglycosides and polymyxin B. In the kidney, mediates the tubular uptake and clearance of leptin. Also mediates transport of leptin across the blood-brain barrier through endocytosis at the choroid plexus epithelium. Endocytosis of leptin in neuronal cells is required for hypothalamic leptin signaling and leptin-mediated regulation of feeding and body weight. Mediates endocytosis and subsequent lysosomal degradation of CST3 in kidney proximal tubule cells. Mediates renal uptake of 25-hydroxyvitamin D3 in complex with the vitamin D3 transporter GC/DBP. Mediates renal uptake of metallothionein-bound heavy metals. Together with CUBN, mediates renal reabsorption of myoglobin. Mediates renal uptake and subsequent lysosomal degradation of APOM. Plays a role in kidney selenium homeostasis by mediating renal endocytosis of selenoprotein SEPP1. Mediates renal uptake of the antiapoptotic protein BIRC5/survivin which may be important for functional integrity of the kidney. Mediates renal uptake of matrix metalloproteinase MMP2 in complex with metalloproteinase inhibitor TIMP1. Mediates endocytosis of Sonic hedgehog protein N-product (ShhN), the active product of SHH. Also mediates ShhN transcytosis. In the embryonic neuroepithelium, mediates endocytic uptake and degradation of BMP4, is required for correct SHH localization in the ventral neural tube and plays a role in patterning of the ventral telencephalon. Required at the onset of neurulation to sequester SHH on the apical surface of neuroepithelial cells of the rostral diencephalon ventral midline and to control PTCH1-dependent uptake and intracellular trafficking of SHH. During neurulation, required in neuroepithelial cells for uptake of folate bound to the folate receptor FOLR1 which is necessary for neural tube closure. In the adult brain, negatively regulates BMP signaling in the subependymal zone which enables neurogenesis to proceed. In astrocytes, mediates endocytosis of ALB which is required for the synthesis of the neurotrophic factor oleic acid. Involved in neurite branching. During optic nerve development, required for SHH-mediated migration and proliferation of oligodendrocyte precursor cells. Mediates endocytic uptake and clearance of SHH in the retinal margin which protects retinal progenitor cells from mitogenic stimuli and keeps them quiescent. Plays a role in reproductive organ development by mediating uptake in reproductive tissues of androgen and estrogen bound to the sex hormone binding protein SHBG. Mediates endocytosis of angiotensin-2. Also mediates endocytosis of angiotensis 1-7. Binds to the complex composed of beta-amyloid protein 40 and CLU/APOJ and mediates its endocytosis and lysosomal degradation. Required for embryonic heart development. Required for normal hearing, possibly through interaction with estrogen in the inner ear. The chain is Low-density lipoprotein receptor-related protein 2 from Homo sapiens (Human).